The sequence spans 3462 residues: DNA-directed RNA polymerase subunit beta'' (3462 aa).

Zn(2+) contacts are provided by C263, C335, C342, and C345. The segment at 541-1085 (KIDDQELSSV…PNKIFSSNLF (545 aa)) is insert-1. Residues 1528-1585 (PQSANERKQILKKARQKLRLFPLNLNEKKNRFSSVTLDLLRDQTTLHKMQSCGEAESG) form an insert-2 region. An insert-3 region spans residues 1602–1699 (KKITEIFTFC…FSKQMGNRLL (98 aa)). The tract at residues 1938-2168 (LKNKMNQSFS…SQASWILETN (231 aa)) is insert-4. The tract at residues 2320-2870 (NLVSGKLNFL…KKKIAKEGAF (551 aa)) is insert-5. The tract at residues 2972–3196 (SKSQRGWFHN…IGQLLRYGKE (225 aa)) is insert-6.

This sequence belongs to the RNA polymerase beta' chain family. RpoC2 subfamily. As to quaternary structure, in plastids the minimal PEP RNA polymerase catalytic core is composed of four subunits: alpha, beta, beta', and beta''. When a (nuclear-encoded) sigma factor is associated with the core the holoenzyme is formed, which can initiate transcription. The cofactor is Zn(2+).

The protein resides in the plastid. It is found in the chloroplast. It carries out the reaction RNA(n) + a ribonucleoside 5'-triphosphate = RNA(n+1) + diphosphate. DNA-dependent RNA polymerase catalyzes the transcription of DNA into RNA using the four ribonucleoside triphosphates as substrates. The chain is DNA-directed RNA polymerase subunit beta'' from Tupiella akineta (Green alga).